Consider the following 437-residue polypeptide: Triacylglycerol lipase (437 aa).

In terms of domain architecture, PE spans 1–100; that stretch reads MVSYVVALPE…AELANASLLQ (100 aa). The tract at residues 101–206 is linker; sequence SEFASGIGNG…GNSPPPLLNS (106 aa). Residues 207-437 are lipase; sequence LLGQTVQYTT…QINQQLGIAA (231 aa). The Involved in the stabilization of the negatively charged intermediate by the formation of the oxyanion hole motif lies at 239-241; the sequence is HGG. Residues serine 309, aspartate 383, and histidine 413 contribute to the active site.

The protein in the N-terminal section; belongs to the mycobacterial PE family. PGRS subfamily. It in the C-terminal section; belongs to the 'GDXG' lipolytic enzyme family. As to quaternary structure, forms aggregates via its PE domain. Upon export, the PE domain is removed by proteolytic cleavage. Cleavage occurs at the cell surface and is not required for secretion. Cleaved after Gly-149 by the aspartic protease PecA. May also be cleaved before Leu-98 and after Ala-136.

It localises to the cytoplasm. The protein localises to the secreted. The protein resides in the cell wall. Its subcellular location is the cell surface. The enzyme catalyses a triacylglycerol + H2O = a diacylglycerol + a fatty acid + H(+). It catalyses the reaction 1,2,3-tri-(9Z-octadecenoyl)-glycerol + H2O = di-(9Z)-octadecenoylglycerol + (9Z)-octadecenoate + H(+). It carries out the reaction an acetyl ester + H2O = an aliphatic alcohol + acetate + H(+). The catalysed reaction is a butanoate ester + H2O = an aliphatic alcohol + butanoate + H(+). The enzyme catalyses a hexanoate ester + H2O = an aliphatic alcohol + hexanoate + H(+). It catalyses the reaction an octanoate ester + H2O = an aliphatic alcohol + octanoate + H(+). It carries out the reaction a dodecanoate ester + H2O = an aliphatic alcohol + dodecanoate + H(+). The catalysed reaction is a tetradecanoate ester + H2O = an aliphatic alcohol + tetradecanoate + H(+). The enzyme catalyses hexadecanoate ester + H2O = an aliphatic alcohol + hexadecanoate + H(+). It catalyses the reaction octadecanoate ester + H2O = an aliphatic alcohol + octadecanoate + H(+). It carries out the reaction 1-butyrylglycerol + H2O = butanoate + glycerol + H(+). The catalysed reaction is 1,2,3-tributanoylglycerol + H2O = dibutanoylglycerol + butanoate + H(+). PE domain down-regulates lipase activity. Its activity is regulated as follows. Cleavage by PecA does not affect surface localization and lipase activity. With respect to regulation, inhibited by diethyl-p-nitrophenyl phosphate (E-600) at 0.5 uM, by phenylmethanesulfonyl fluoride at 5 mM and by polyethylene glycol sorbitan monolaurate (Tween 20). Also inhibited by CaCl(2), CoCl(2), MnCl(2), ZnCl(2) and MgCl(2). Inhibited by several hydrazides compounds. Stimulated slightly by SDS at concentrations up to 2 mM, above which the activity is severely inhibited. Functionally, catalyzes the hydrolysis of both intracellular and extracellular triacylglycerol (TAG). In vitro, can also hydrolyze p-nitrophenyl (pNP) esters with various chain lengths, including pNP-acetate (C2), pNP-butyrate (C4), pNP-caproate (C6), pNP-caprylate (C8), pNP-laurate (C12), pNP-myristate (C14), pNP-palmitate (C16) and pNP-stearate (C18). Also hydrolyzes monobutyrin, tributyrin and trioctanoin. Overexpression results in increase of virulence characterized by reduced survival of infected mouse and increased burden of bacilli in the lungs. Hydrolyzes internal or host-derived TAG depending on its localization. In terms of biological role, hydrolyzes TAG that accumulates within mycobacterial intracytosolic lipid inclusions (ILI). Probably responsible for the utilization of stored long-chain TAG during the dormancy and reactivation stages of the pathogen. Hydrolyzes host-derived TAG. This chain is Triacylglycerol lipase, found in Mycobacterium tuberculosis (strain ATCC 25618 / H37Rv).